A 2371-amino-acid polypeptide reads, in one-letter code: Highly reducing polyketide synthase ntnH (2371 aa).

The Ketosynthase family 3 (KS3) domain occupies 10–429; sequence PSPIAIVGIG…GANAHVILEG (420 aa). Active-site for beta-ketoacyl synthase activity residues include cysteine 180, histidine 316, and histidine 352. The segment at 528-796 is malonyl-CoA:ACP transacylase (MAT) domain; the sequence is FIFTGQGAQW…NSCLSRGADA (269 aa). The tract at residues 858–986 is N-terminal hotdog fold; that stretch reads HELLGARVIG…GKVHPGNAST (129 aa). Positions 858-1142 are dehydratase (DH) domain; sequence HELLGARVIG…GIRFRILENN (285 aa). A PKS/mFAS DH domain is found at 858-1145; sequence HELLGARVIG…FRILENNRSK (288 aa). Residue histidine 890 is the Proton acceptor; for dehydratase activity of the active site. The C-terminal hotdog fold stretch occupies residues 1001–1145; sequence VRGVISAKWY…FRILENNRSK (145 aa). Catalysis depends on aspartate 1059, which acts as the Proton donor; for dehydratase activity. Positions 1309 to 1456 are methyltransferase (CMet) domain; the sequence is FFQLLGHNKK…FENVTAIMDQ (148 aa). An enoyl reductase (ER) (ER) domain region spans residues 1669-1968; that stretch reads GLLSSLQWQG…GHRPIGAICI (300 aa). Residues 1993 to 2167 form a ketoreductase (KR) domain region; that stretch reads SYVLIGGLGG…ASVIDLGVME (175 aa). In terms of domain architecture, Carrier spans 2280–2362; the sequence is EDETAVAEFL…DLGKLARSRI (83 aa). Serine 2322 is subject to O-(pantetheine 4'-phosphoryl)serine.

It functions in the pathway secondary metabolite biosynthesis; terpenoid biosynthesis. Functionally, highly reducing polyketide synthase; part of the gene cluster that mediates the biosynthesis of the meroterpenoids nectripenoids A and B, as well as cochliquninone D and isocochliquninone E. The pathway probably begins with the HR-PKS ntnH that catalyzes two chain-extension steps to form a reduced triketide, which then primes the SAT domain in the NR-PKS ntnG to initiate three more cycles of extension to give a linear hexaketide corresponding to the polyketide part of nectripenoids. The FAD-dependent monooxygenase ntnJ then performs an oxidative decarboxylation at C11 of the ntnH/ntnG product, via an electrophilic aromatic hydroxylation with concomitant ipso-decarboxylation. The membrane-bound polyprenyl transferase ntnF then introduces a farnesyl group before the FAD-dependent monooxygenase ntnK functions as the first epoxidase on terminal C12'-C13' olefin, followed by a second epoxidation on C7'-C8' catalyzed by ntnA. The terpene cyclase/mutase ntnI then initiates the sequential tricyclic ring formation through protonation of the terminal epoxide and catalyzes the regioselective and stereoselective 6/6/6-tricyclic ring formation. The cytochrome P450 monooxygenase ntnM may then hydroxylate C1'. This chain is Highly reducing polyketide synthase ntnH, found in Nectria sp.